Reading from the N-terminus, the 431-residue chain is Probable carboxylic ester hydrolase LipM (431 aa).

A run of 3 helical transmembrane segments spans residues 7–27 (IHVI…AATI), 38–58 (FASL…LPTL), and 75–95 (PVRA…LNLS). Catalysis depends on residues Ser-261, Asp-357, and His-390.

It belongs to the 'GDXG' lipolytic enzyme family.

The protein resides in the membrane. This is Probable carboxylic ester hydrolase LipM from Mycobacterium tuberculosis (strain ATCC 25618 / H37Rv).